The primary structure comprises 179 residues: Probable phosphopantothenoylcysteine decarboxylase (179 aa).

Asn-124 is a binding site for substrate. The active-site Proton donor is Cys-157.

It belongs to the HFCD (homooligomeric flavin containing Cys decarboxylase) superfamily. FMN is required as a cofactor.

It carries out the reaction N-[(R)-4-phosphopantothenoyl]-L-cysteine + H(+) = (R)-4'-phosphopantetheine + CO2. It functions in the pathway cofactor biosynthesis; coenzyme A biosynthesis; CoA from (R)-pantothenate: step 3/5. In terms of biological role, catalyzes the decarboxylation of 4'-phosphopantothenoylcysteine to 4'-phosphopantetheine. This Streptococcus mutans serotype c (strain ATCC 700610 / UA159) protein is Probable phosphopantothenoylcysteine decarboxylase (coaC).